The following is a 559-amino-acid chain: Frizzled-1 (559 aa).

A signal peptide spans 1 to 35 (MKHSHLLQRCSAQLCTRGSSLILSLLLSVCLSVEG). Topologically, residues 36–239 (QYNGEKGISI…FAPEELNFAR (204 aa)) are extracellular. One can recognise an FZ domain in the interval 46–165 (PDHGYCQPIS…NGAGELCVGQ (120 aa)). 5 disulfides stabilise this stretch: cysteine 51–cysteine 112, cysteine 59–cysteine 105, cysteine 96–cysteine 133, cysteine 122–cysteine 162, and cysteine 126–cysteine 150. Residue asparagine 65 is glycosylated (N-linked (GlcNAc...) asparagine). Asparagine 166 is a glycosylation site (N-linked (GlcNAc...) asparagine). The chain crosses the membrane as a helical span at residues 240–260 (IWIGIWSVLCCASTLFTVLTY). Residues 261–273 (LVDMKRFSYPERP) are Cytoplasmic-facing. The chain crosses the membrane as a helical span at residues 274 to 294 (IIFLSGCYTMVAIAYIAGFLL). Residues 295–321 (EDKVVCNERFAEDGYKTVAQGTKKEGC) are Extracellular-facing. Residues 322–342 (TFLFMMLYFFSMASSIWWVIL) traverse the membrane as a helical segment. Over 343-364 (SLTWFLAAGMKWGHEAIEANSQ) the chain is Cytoplasmic. Residues 365-385 (YFHLAAWAVPAIKTITILAVG) traverse the membrane as a helical segment. The Extracellular portion of the chain corresponds to 386–408 (QVDGDTLSGVCFVGINNVDALRG). A helical membrane pass occupies residues 409–429 (FVLAPLFVYLFIGTSFLLAGF). Residues 430–455 (VSLFRIRTIMKHDGTKTEKLEKLMVR) are Cytoplasmic-facing. A helical transmembrane segment spans residues 456–476 (IGIFSVLYTVPATIVIACYFY). The Extracellular segment spans residues 477-513 (EQAFREQWEKSWISQSCKTYAIPCPSTGHPPMSPDFT). The chain crosses the membrane as a helical span at residues 514–534 (VFMIKYLMTLIVGITSGFWIW). The Cytoplasmic portion of the chain corresponds to 535–559 (SGKTLNSWRKFYTRLTNSKQGETTV). Positions 537–542 (KTLNSW) match the Lys-Thr-X-X-X-Trp motif, mediates interaction with the PDZ domain of Dvl family members motif. The short motif at 557-559 (TTV) is the PDZ-binding element.

Belongs to the G-protein coupled receptor Fz/Smo family. As to quaternary structure, interacts with wnt8. In the embryo, expressed in the heart, pronephros and otic vesicles.

It is found in the cell membrane. In terms of biological role, receptor for Wnt proteins. Functions in the canonical Wnt/beta-catenin signaling pathway. The canonical Wnt/beta-catenin signaling pathway leads to the activation of disheveled proteins, inhibition of GSK-3 kinase, nuclear accumulation of beta-catenin and activation of Wnt target genes. A second signaling pathway involving PKC and calcium fluxes has been seen for some family members, but it is not yet clear if it represents a distinct pathway or if it can be integrated in the canonical pathway, as PKC seems to be required for Wnt-mediated inactivation of GSK-3 kinase. Both pathways seem to involve interactions with G-proteins. May be involved in transduction and intercellular transmission of polarity information during tissue morphogenesis and/or in differentiated tissues. This chain is Frizzled-1 (fzd1), found in Xenopus laevis (African clawed frog).